A 430-amino-acid chain; its full sequence is tRNA(Ile)-lysidine synthase (430 aa).

Residue 24-29 (SGGLDS) participates in ATP binding.

This sequence belongs to the tRNA(Ile)-lysidine synthase family.

It localises to the cytoplasm. The catalysed reaction is cytidine(34) in tRNA(Ile2) + L-lysine + ATP = lysidine(34) in tRNA(Ile2) + AMP + diphosphate + H(+). In terms of biological role, ligates lysine onto the cytidine present at position 34 of the AUA codon-specific tRNA(Ile) that contains the anticodon CAU, in an ATP-dependent manner. Cytidine is converted to lysidine, thus changing the amino acid specificity of the tRNA from methionine to isoleucine. This is tRNA(Ile)-lysidine synthase from Haemophilus influenzae (strain PittGG).